The primary structure comprises 400 residues: Exodeoxyribonuclease 7 large subunit (400 aa).

This sequence belongs to the XseA family. Heterooligomer composed of large and small subunits.

It is found in the cytoplasm. The enzyme catalyses Exonucleolytic cleavage in either 5'- to 3'- or 3'- to 5'-direction to yield nucleoside 5'-phosphates.. Bidirectionally degrades single-stranded DNA into large acid-insoluble oligonucleotides, which are then degraded further into small acid-soluble oligonucleotides. This is Exodeoxyribonuclease 7 large subunit from Clostridium kluyveri (strain NBRC 12016).